We begin with the raw amino-acid sequence, 165 residues long: Cyclic pyranopterin monophosphate synthase (165 aa).

Substrate-binding positions include 79 to 81 (LCH) and 117 to 118 (ME). The active site involves D132.

It belongs to the MoaC family. In terms of assembly, homohexamer; trimer of dimers.

The catalysed reaction is (8S)-3',8-cyclo-7,8-dihydroguanosine 5'-triphosphate = cyclic pyranopterin phosphate + diphosphate. It participates in cofactor biosynthesis; molybdopterin biosynthesis. Catalyzes the conversion of (8S)-3',8-cyclo-7,8-dihydroguanosine 5'-triphosphate to cyclic pyranopterin monophosphate (cPMP). This Chloroflexus aggregans (strain MD-66 / DSM 9485) protein is Cyclic pyranopterin monophosphate synthase.